A 166-amino-acid chain; its full sequence is Small ribosomal subunit protein uS5 (166 aa).

The S5 DRBM domain occupies 12 to 75; that stretch reads YIEKLVQVNR…EAARRNMIQV (64 aa).

The protein belongs to the universal ribosomal protein uS5 family. In terms of assembly, part of the 30S ribosomal subunit. Contacts proteins S4 and S8.

Its function is as follows. With S4 and S12 plays an important role in translational accuracy. In terms of biological role, located at the back of the 30S subunit body where it stabilizes the conformation of the head with respect to the body. The polypeptide is Small ribosomal subunit protein uS5 (Azotobacter vinelandii (strain DJ / ATCC BAA-1303)).